Here is a 430-residue protein sequence, read N- to C-terminus: Enolase (430 aa).

(2R)-2-phosphoglycerate is bound at residue Gln164. Glu206 functions as the Proton donor in the catalytic mechanism. 3 residues coordinate Mg(2+): Asp243, Glu286, and Asp313. (2R)-2-phosphoglycerate contacts are provided by Lys338, Arg367, Ser368, and Lys389. Lys338 functions as the Proton acceptor in the catalytic mechanism.

The protein belongs to the enolase family. As to quaternary structure, component of the RNA degradosome, a multiprotein complex involved in RNA processing and mRNA degradation. Mg(2+) is required as a cofactor.

The protein resides in the cytoplasm. Its subcellular location is the secreted. It localises to the cell surface. It carries out the reaction (2R)-2-phosphoglycerate = phosphoenolpyruvate + H2O. The protein operates within carbohydrate degradation; glycolysis; pyruvate from D-glyceraldehyde 3-phosphate: step 4/5. In terms of biological role, catalyzes the reversible conversion of 2-phosphoglycerate (2-PG) into phosphoenolpyruvate (PEP). It is essential for the degradation of carbohydrates via glycolysis. This Dichelobacter nodosus (strain VCS1703A) protein is Enolase.